The sequence spans 479 residues: Glutamyl-tRNA(Gln) amidotransferase subunit A (479 aa).

Catalysis depends on charge relay system residues Lys75 and Ser150. The active-site Acyl-ester intermediate is the Ser174.

The protein belongs to the amidase family. GatA subfamily. In terms of assembly, heterotrimer of A, B and C subunits.

It catalyses the reaction L-glutamyl-tRNA(Gln) + L-glutamine + ATP + H2O = L-glutaminyl-tRNA(Gln) + L-glutamate + ADP + phosphate + H(+). In terms of biological role, allows the formation of correctly charged Gln-tRNA(Gln) through the transamidation of misacylated Glu-tRNA(Gln) in organisms which lack glutaminyl-tRNA synthetase. The reaction takes place in the presence of glutamine and ATP through an activated gamma-phospho-Glu-tRNA(Gln). This chain is Glutamyl-tRNA(Gln) amidotransferase subunit A, found in Synechococcus elongatus (strain ATCC 33912 / PCC 7942 / FACHB-805) (Anacystis nidulans R2).